The primary structure comprises 381 residues: Subtilisin E (381 aa).

The signal sequence occupies residues 1-29 (MRSKKLWISLLFALTLIFTMAFSNMSAQA). A propeptide spanning residues 30 to 106 (AGKSSTEKKY…VEEDHIAHEY (77 aa)) is cleaved from the precursor. Residues 38-103 (KYIVGFKQTM…VAYVEEDHIA (66 aa)) enclose the Inhibitor I9 domain. A Ca(2+)-binding site is contributed by Q108. Positions 111–380 (PYGISQIKAP…KGLINVQAAA (270 aa)) constitute a Peptidase S8 domain. D138 functions as the Charge relay system in the catalytic mechanism. D147 is a Ca(2+) binding site. The Charge relay system role is filled by H170. Ca(2+) is bound by residues L181, N183, I185, V187, A275, Y277, T280, and D303. S327 (charge relay system) is an active-site residue.

The protein belongs to the peptidase S8 family. It depends on Ca(2+) as a cofactor.

It localises to the secreted. The catalysed reaction is Hydrolysis of proteins with broad specificity for peptide bonds, and a preference for a large uncharged residue in P1. Hydrolyzes peptide amides.. Inhibited by PMSF (phenylmethylsulphonyl fluoride) and 3,4-dichloroisocoumarin but not by EDTA (shown for strain RT-5). Its function is as follows. An extracellular alkaline serine protease, it catalyzes the hydrolysis of proteins and peptide amides. The sequence is that of Subtilisin E from Bacillus subtilis (strain 168).